Here is a 240-residue protein sequence, read N- to C-terminus: Uridylate kinase (240 aa).

13–16 contributes to the ATP binding site; the sequence is KFSG. Gly-55 is a binding site for UMP. The ATP site is built by Gly-56 and Arg-60. UMP is bound by residues Asp-76 and 137 to 144; that span reads TGNPFFTT. Thr-164, Tyr-170, and Asp-173 together coordinate ATP.

It belongs to the UMP kinase family. As to quaternary structure, homohexamer.

It is found in the cytoplasm. The catalysed reaction is UMP + ATP = UDP + ADP. It participates in pyrimidine metabolism; CTP biosynthesis via de novo pathway; UDP from UMP (UMPK route): step 1/1. With respect to regulation, inhibited by UTP. Catalyzes the reversible phosphorylation of UMP to UDP. The protein is Uridylate kinase of Helicobacter pylori (strain HPAG1).